Consider the following 196-residue polypeptide: MQPINTFQAKAVALPIENIDTDQIIPARYLKVTDKNGLGEALFTDWRGEPDFVLNQPYAQGAGVLIAGHNFGCGSSREHAPWALQGFGFQAVISTYFADIFKGNALKNGLLPIVVDAPTLARLTEQCLANQTIDVSVDLENQQVHVAGETISFPIDAFSKHCLLHGVDQLGYIQAQETAIQAYEASHAARVNTVGA.

It belongs to the LeuD family. LeuD type 1 subfamily. Heterodimer of LeuC and LeuD.

The catalysed reaction is (2R,3S)-3-isopropylmalate = (2S)-2-isopropylmalate. It participates in amino-acid biosynthesis; L-leucine biosynthesis; L-leucine from 3-methyl-2-oxobutanoate: step 2/4. In terms of biological role, catalyzes the isomerization between 2-isopropylmalate and 3-isopropylmalate, via the formation of 2-isopropylmaleate. This Herpetosiphon aurantiacus (strain ATCC 23779 / DSM 785 / 114-95) protein is 3-isopropylmalate dehydratase small subunit.